The chain runs to 121 residues: MTNIIDQINAEQMQGKEIPDFNPGDTVLVQVKVIEGNRERLQAFEGVVIAKRNRGLNSAFTVRKISHNVGVERVFQTYSPIVDSITVKRRGDVRRAKLYYLRNLAGRAARIKEKLSGKKGD.

The protein belongs to the bacterial ribosomal protein bL19 family.

Functionally, this protein is located at the 30S-50S ribosomal subunit interface and may play a role in the structure and function of the aminoacyl-tRNA binding site. In Legionella pneumophila (strain Paris), this protein is Large ribosomal subunit protein bL19.